Consider the following 342-residue polypeptide: Nicotinate-nucleotide--dimethylbenzimidazole phosphoribosyltransferase (342 aa).

Catalysis depends on E311, which acts as the Proton acceptor.

It belongs to the CobT family.

It catalyses the reaction 5,6-dimethylbenzimidazole + nicotinate beta-D-ribonucleotide = alpha-ribazole 5'-phosphate + nicotinate + H(+). It participates in nucleoside biosynthesis; alpha-ribazole biosynthesis; alpha-ribazole from 5,6-dimethylbenzimidazole: step 1/2. Functionally, catalyzes the synthesis of alpha-ribazole-5'-phosphate from nicotinate mononucleotide (NAMN) and 5,6-dimethylbenzimidazole (DMB). In Shewanella piezotolerans (strain WP3 / JCM 13877), this protein is Nicotinate-nucleotide--dimethylbenzimidazole phosphoribosyltransferase.